The chain runs to 461 residues: Metacaspase-1 (461 aa).

Gly residues-rich tracts occupy residues Met-1–Gly-21, Gln-45–Pro-66, Gln-74–Pro-86, and Pro-105–Gly-119. The interval Met-1–Thr-154 is disordered. 2 stretches are compositionally biased toward low complexity: residues Gly-121 to Gln-131 and His-138 to Asn-148. Active-site residues include His-252 and Cys-308.

The protein belongs to the peptidase C14B family.

Involved in cell death (apoptosis). This Yarrowia lipolytica (strain CLIB 122 / E 150) (Yeast) protein is Metacaspase-1 (MCA1).